The sequence spans 197 residues: Imidazoleglycerol-phosphate dehydratase (197 aa).

Belongs to the imidazoleglycerol-phosphate dehydratase family.

Its subcellular location is the cytoplasm. It catalyses the reaction D-erythro-1-(imidazol-4-yl)glycerol 3-phosphate = 3-(imidazol-4-yl)-2-oxopropyl phosphate + H2O. It participates in amino-acid biosynthesis; L-histidine biosynthesis; L-histidine from 5-phospho-alpha-D-ribose 1-diphosphate: step 6/9. The chain is Imidazoleglycerol-phosphate dehydratase from Pseudomonas aeruginosa (strain LESB58).